Reading from the N-terminus, the 268-residue chain is NAC domain-containing protein 41 (268 aa).

In terms of domain architecture, NAC spans 15 to 160; it reads LPPGFRFHPT…NWVLCRVFLK (146 aa). A DNA-binding region spans residues 109 to 166; the sequence is VGMKKTLVFYKGKPPNGTRTNWVLHEYRLVDSQQDSLYGQNMNWVLCRVFLKKRSNSN. Residues 166–190 are disordered; the sequence is NSKRKEDEKEEVENEKETETERERE. Over residues 180 to 190 the composition is skewed to basic and acidic residues; the sequence is EKETETERERE.

It localises to the nucleus. Transcription activator of the mannan synthase CSLA9. Recognizes and binds to DNA-specific sequence of CSLA9 promoter. This is NAC domain-containing protein 41 from Arabidopsis thaliana (Mouse-ear cress).